Consider the following 107-residue polypeptide: UPF0122 protein MYPE4850 (107 aa).

This sequence belongs to the UPF0122 family.

Might take part in the signal recognition particle (SRP) pathway. This is inferred from the conservation of its genetic proximity to ftsY/ffh. May be a regulatory protein. The chain is UPF0122 protein MYPE4850 from Malacoplasma penetrans (strain HF-2) (Mycoplasma penetrans).